The primary structure comprises 218 residues: Small ribosomal subunit protein uS3 (218 aa).

A KH type-2 domain is found at 38-106 (IRKFIATKLA…RVHINIVEIK (69 aa)).

The protein belongs to the universal ribosomal protein uS3 family. As to quaternary structure, part of the 30S ribosomal subunit. Forms a tight complex with proteins S10 and S14.

In terms of biological role, binds the lower part of the 30S subunit head. Binds mRNA in the 70S ribosome, positioning it for translation. The polypeptide is Small ribosomal subunit protein uS3 (Enterococcus faecalis (strain ATCC 700802 / V583)).